Consider the following 604-residue polypeptide: Protein TAX4 (604 aa).

5 disordered regions span residues 38 to 77, 133 to 249, 267 to 300, 338 to 380, and 394 to 428; these read HPNGNAGSAERPRHLKVESAPVVKSEPSLPRMRQPEPRSI, FSNR…RQQE, GTLPDLIPRSQRKTSKPRFKHKLLRSPEQQQENL, DETF…KGLK, and PFPHHHHHHHQLHNPNSHHLHTHHHTSSHKFNEDK. Over residues 176-185 the composition is skewed to polar residues; that stretch reads YDNNVRSRSI. 2 stretches are compositionally biased toward low complexity: residues 186–203 and 224–240; these read SPQVSYSTSLSSSCSISS and SMSSYSLASKASAKASL. Composition is skewed to basic residues over residues 276–290, 366–379, and 396–421; these read SQRKTSKPRFKHKLL, KKKKSRRSKIKKGL, and PHHHHHHHQLHNPNSHHLHTHHHTSS. The EH domain maps to 469 to 559; that stretch reads ANEDDESHLQ…RVWNSVDGYV (91 aa).

This sequence belongs to the IRS4 family. Interacts with INP51.

Its function is as follows. With IRS4, acts as a positive regulator of INP51 activity and phosphatidylinositol 4,5-bisphosphate turnover. Negatively regulates signaling through the cell integrity pathway, including the MAP kinase SLT2. This is Protein TAX4 (TAX4) from Saccharomyces cerevisiae (strain YJM789) (Baker's yeast).